A 139-amino-acid polypeptide reads, in one-letter code: Superoxide dismutase [Cu-Zn] (139 aa).

Cys6 carries the S-palmitoyl cysteine lipid modification. Cu cation is bound by residues His47 and His49. Positions 72, 81, and 84 each coordinate Zn(2+). Residue His114 coordinates Cu cation. Positions 118 to 129 (DDLGKGGNDESL) are enriched in basic and acidic residues. Residues 118–139 (DDLGKGGNDESLKTGNAGGRMA) are disordered.

Belongs to the Cu-Zn superoxide dismutase family. As to quaternary structure, homodimer. It depends on Cu cation as a cofactor. Zn(2+) serves as cofactor.

Its subcellular location is the cytoplasm. It is found in the nucleus. The catalysed reaction is 2 superoxide + 2 H(+) = H2O2 + O2. Its function is as follows. Destroys radicals which are normally produced within the cells and which are toxic to biological systems. The protein is Superoxide dismutase [Cu-Zn] (sod1) of Lampanyctus crocodilus (Jewel lanternfish).